Consider the following 601-residue polypeptide: MAMRTHYCGLVTEALMGQTVTLCGWVNRRRDHGGVIFIDVRDREGYVQVVCDPDRAATFAVAENLRNEFCVQVTGLVRARPEGTTNDQLKSGKIEVLCHELKVLNPSVTPPFLLDDDNLSETTRLTHRVLDLRRPAMQRNMMLRYKVTMETRKFLDANGFIDIETPMLGKSTPEGARDYLVPSRVHDGSFFALPQSPQLFKQLLMVAGYDRYYQIVKCFRDEDLRADRQPEFTQIDIETSFLAEEEIREMFEGMIRNVFRNAAGIDLPVFPTMTYGDAMFKYGSDKPDLRVKLEFTELTELMKRVEFKVFSNAATMQGGRVVALRVPGGGAEGGLSRGEIDAYQEFVKIYGAKGLAYIKVNDAAAGREGLQSPIVKNLDDASLAEIIARTGARNGDILFFGADKEKIVNDAIGALRVKIGHSAFGKKSGLFDDRWAPLWVVDFPMFEFDEEGQRWSAVHHPFTAPKDGHEDLMDTAPEKCIAKAYDMVLNGIEMGGGSVRIHREEVQSKVFRALKISAEDAQLKFGFLLDALQYGAPPHGGIAIGLDRLVMLMTGAESIRDVIAFPKTQRAQDLLTQAPSPVDEKQLRELHIRLRNVQQPA.

E174 serves as a coordination point for L-aspartate. Residues 198 to 201 form an aspartate region; it reads QLFK. Position 220 (R220) interacts with L-aspartate. Residues 220–222 and Q229 each bind ATP; that span reads RDE. H459 is an L-aspartate binding site. E493 is a binding site for ATP. Residue R500 participates in L-aspartate binding. An ATP-binding site is contributed by 545-548; that stretch reads GLDR.

Belongs to the class-II aminoacyl-tRNA synthetase family. Type 1 subfamily. Homodimer.

The protein localises to the cytoplasm. The enzyme catalyses tRNA(Asx) + L-aspartate + ATP = L-aspartyl-tRNA(Asx) + AMP + diphosphate. Functionally, aspartyl-tRNA synthetase with relaxed tRNA specificity since it is able to aspartylate not only its cognate tRNA(Asp) but also tRNA(Asn). Reaction proceeds in two steps: L-aspartate is first activated by ATP to form Asp-AMP and then transferred to the acceptor end of tRNA(Asp/Asn). The polypeptide is Aspartate--tRNA(Asp/Asn) ligase (Variovorax paradoxus (strain S110)).